The primary structure comprises 183 residues: Calcium-binding protein M (183 aa).

Residue Gly-2 is the site of N-myristoyl glycine attachment. 4 consecutive EF-hand domains span residues 25–60, 61–96, 97–132, and 142–177; these read EEVANIYGEFKKFDKDGNGSFDRKEFVLFFKSKLPN, YPEDNLNKLFDAFDSDKSNTIDFKELTVALSIIGKG, SAEDKLKVLFDIYDKDKSGILEKKEVDEMIALMKNV, and DIELFIVKLFEKIDKDKNNLISREEFLTEGARSPSL. The Ca(2+) site is built by Asp-74, Asp-76, Ser-78, Thr-80, Glu-85, Asp-110, Asp-112, Ser-114, Glu-121, Asp-155, Asp-157, Asn-159, and Glu-166.

Belongs to the recoverin family.

In Dictyostelium discoideum (Social amoeba), this protein is Calcium-binding protein M (cbpM).